A 198-amino-acid polypeptide reads, in one-letter code: Ciliary neurotrophic factor (198 aa).

It belongs to the CNTF family. Nervous system.

The protein resides in the cytoplasm. In terms of biological role, CNTF is a survival factor for various neuronal cell types. Seems to prevent the degeneration of motor axons after axotomy. The protein is Ciliary neurotrophic factor (Cntf) of Mus musculus (Mouse).